A 521-amino-acid chain; its full sequence is Cytochrome P450 1A1 (521 aa).

Phenylalanine 229 is a binding site for substrate. Cysteine 463 serves as a coordination point for heme.

Belongs to the cytochrome P450 family. Heme serves as cofactor.

It localises to the endoplasmic reticulum membrane. The protein localises to the microsome membrane. The enzyme catalyses an organic molecule + reduced [NADPH--hemoprotein reductase] + O2 = an alcohol + oxidized [NADPH--hemoprotein reductase] + H2O + H(+). In terms of biological role, cytochromes P450 are a group of heme-thiolate monooxygenases. They oxidize a variety of structurally unrelated compounds, including steroids, fatty acids, and xenobiotics. This Chaetodon capistratus (Four-eye butterflyfish) protein is Cytochrome P450 1A1 (cyp1a1).